The chain runs to 169 residues: Interleukin-36 gamma (169 aa).

Residues 1–17 (MRGTPGDADGGGRAVYQ) constitute a propeptide that is removed on maturation.

It belongs to the IL-1 family. As to quaternary structure, interacts with cargo receptor TMED10; the interaction mediates the translocation from the cytoplasm into the ERGIC (endoplasmic reticulum-Golgi intermediate compartment) and thereby secretion. In terms of processing, N-terminal truncation leads to a dramatic enhancement of its activity (&gt;1000-fold). Proteolytically cleaved by cathepsin CTSG. As to expression, highly expressed in tissues containing epithelial cells: skin, lung, stomach and esophagus. Expressed in bronchial epithelial. In skin is expressed only in keratinocytes but not in fibroblasts, endothelial cells or melanocytes. Up-regulated in lesional psoriasis skin. Expressed in monocyte-derived dendritic cells and M1 macrophages.

The protein resides in the cytoplasm. It localises to the secreted. Functionally, cytokine that binds to and signals through the IL1RL2/IL-36R receptor which in turn activates NF-kappa-B and MAPK signaling pathways in target cells. Part of the IL-36 signaling system that is thought to be present in epithelial barriers and to take part in local inflammatory response; similar to the IL-1 system with which it shares the coreceptor IL1RAP. Seems to be involved in skin inflammatory response by acting on keratinocytes, dendritic cells and indirectly on T-cells to drive tissue infiltration, cell maturation and cell proliferation. In cultured keratinocytes induces the expression of macrophage, T-cell, and neutrophil chemokines, such as CCL3, CCL4, CCL5, CCL2, CCL17, CCL22, CL20, CCL5, CCL2, CCL17, CCL22, CXCL8, CCL20 and CXCL1; also stimulates its own expression and that of the prototypic cutaneous pro-inflammatory parameters TNF-alpha, S100A7/psoriasin and inducible NOS. May play a role in pro-inflammatory responses during particular neutrophilic airway inflammation: activates mitogen-activated protein kinases and NF-kappa B in primary lung fibroblasts, and stimulates the expression of IL-8 and CXCL3 and Th17 chemokine CCL20 in lung fibroblasts. May be involved in the innate immune response to fungal pathogens, such as Aspergillus fumigatus. The chain is Interleukin-36 gamma from Homo sapiens (Human).